The chain runs to 957 residues: Receptor-like protein 34 (957 aa).

A signal peptide spans 1-31; that stretch reads MKGSWVVSTSIIRITLSFTFLFICHFSDVLA. Residues 32 to 910 lie on the Extracellular side of the membrane; the sequence is APTRHLCRPE…EEEDEDLISW (879 aa). Residues N78, N101, N114, N143, N167, N191, and N215 are each glycosylated (N-linked (GlcNAc...) asparagine). LRR repeat units follow at residues 120–143, 144–167, 168–192, 194–216, 217–240, 241–264, 266–287, 288–312, 313–336, 338–360, 361–384, 386–409, 412–434, 435–459, 460–483, 487–510, 511–534, and 535–557; these read LHFL…SIEN, LSHL…SIGN, LSRL…IGNL, HLTF…IGNL, SHLT…IGGL, SNLT…IGNL, QLIV…SFGN, LNQL…LLNL, TGLS…ITSL, NLMA…LFII, PSLT…NISS, SNLQ…ISKL, LQEL…IFSH, LKSL…ILPY, FKTL…SVSS, SQSI…LRTQ, HELG…LWTL, and PNLF…TKPE. N242 and N263 each carry an N-linked (GlcNAc...) asparagine glycan. N311 and N332 each carry an N-linked (GlcNAc...) asparagine glycan. N381 carries N-linked (GlcNAc...) asparagine glycosylation. N477 carries N-linked (GlcNAc...) asparagine glycosylation. N541, N544, N569, N593, N608, and N618 each carry an N-linked (GlcNAc...) asparagine glycan. An LRR 19; degenerate repeat occupies 558-580; sequence PSMAYLLGSNNNFTGKIPSFICE. LRR repeat units follow at residues 581 to 605, 606 to 630, 632 to 652, 653 to 675, 677 to 698, 699 to 722, 765 to 789, 790 to 813, 815 to 837, and 839 to 862; these read LRSL…MENL, KSNL…IFES, RSLD…LRFF, SNLE…WLSS, QKLQ…QALF, PKLR…YFVE, LTIY…IGLL, KELH…IGNL, ALES…IGNL, and LLSY…QFLT. N712 carries N-linked (GlcNAc...) asparagine glycosylation. N-linked (GlcNAc...) asparagine glycans are attached at residues N796, N812, N836, and N844. The helical transmembrane segment at 911–931 threads the bilayer; the sequence is IAAAIGFGPGIAFGLMFGYIL. Residues 932-957 are Cytoplasmic-facing; the sequence is VSYKPEWFMNPFGRNNRRRKRHTTTH.

Belongs to the RLP family.

It is found in the cell membrane. The polypeptide is Receptor-like protein 34 (Arabidopsis thaliana (Mouse-ear cress)).